Here is a 64-residue protein sequence, read N- to C-terminus: Potassium channel toxin alpha-KTx J123 (64 aa).

Positions 1–21 (MNKVYLVAVLVLFLALTINES) are cleaved as a signal peptide. 3 disulfides stabilise this stretch: Cys-30–Cys-52, Cys-37–Cys-60, and Cys-41–Cys-62.

It belongs to the short scorpion toxin superfamily. Potassium channel inhibitor family. Alpha-KTx 11 subfamily. Expressed by the venom gland.

It is found in the secreted. In terms of biological role, this recombinant toxin inhibits mammalian voltage-gated potassium channels Kv1.3/KCNA3 (IC(50)=0.79 nM) and Kv1.2/KCNA2 (IC(50)=26.4 nM). In Olivierus martensii (Manchurian scorpion), this protein is Potassium channel toxin alpha-KTx J123.